The primary structure comprises 228 residues: Cytidylate kinase (228 aa).

10–18 (GPSGSGKGT) serves as a coordination point for ATP.

This sequence belongs to the cytidylate kinase family. Type 1 subfamily.

It is found in the cytoplasm. It catalyses the reaction CMP + ATP = CDP + ADP. The enzyme catalyses dCMP + ATP = dCDP + ADP. This is Cytidylate kinase from Acinetobacter baumannii (strain SDF).